The chain runs to 408 residues: AA9 family lytic polysaccharide monooxygenase A (408 aa).

Residues 1–20 form the signal peptide; sequence MKTTTYSLLALAAASKLASA. Histidine 21 and histidine 103 together coordinate Cu(2+). A disulfide bridge links cysteine 63 with cysteine 186. Asparagine 151 is a glycosylation site (N-linked (GlcNAc...) asparagine). Histidine 172 provides a ligand contact to O2. Position 183 (tyrosine 183) interacts with Cu(2+). N-linked (GlcNAc...) asparagine glycans are attached at residues asparagine 331 and asparagine 381. Residues 369-405 form the CBM1 domain; sequence GVAKQYERCGGINHTGPTTCESGSVCKKWNPYYYQCV.

This sequence belongs to the polysaccharide monooxygenase AA9 family. It depends on Cu(2+) as a cofactor.

It is found in the secreted. It catalyses the reaction [(1-&gt;4)-beta-D-glucosyl]n+m + reduced acceptor + O2 = 4-dehydro-beta-D-glucosyl-[(1-&gt;4)-beta-D-glucosyl]n-1 + [(1-&gt;4)-beta-D-glucosyl]m + acceptor + H2O.. In terms of biological role, lytic polysaccharide monooxygenase (LPMO) that depolymerizes crystalline and amorphous polysaccharides via the oxidation of scissile alpha- or beta-(1-4)-glycosidic bonds, yielding C4 oxidation products. Catalysis by LPMOs requires the reduction of the active-site copper from Cu(II) to Cu(I) by a reducing agent and H(2)O(2) or O(2) as a cosubstrate. This chain is AA9 family lytic polysaccharide monooxygenase A (eglD), found in Aspergillus kawachii (strain NBRC 4308) (White koji mold).